Consider the following 542-residue polypeptide: MARYVFITGGVVSSLGKGIAAAALAALLQARGYRVRIRKLDPYLNVDPGTISPYQHGEVFVTDDGAETDLDLGHYERFTGRPANQQDNITTGRIYRNIIEKERRGDYLGATVQVIPHVTDEIKNFVLEGNEDYDFVLCEIGGTVGDIEAMPFLEAIRQLGNELPRGTAVYIHLTLMPYIPAAGELKTKPTQHSVKELRSIGIAPDILLVRADREIPESERRKLSLFCNVRESAVIQALDVATIYDVPIAYHKEGLDSEVLSAFGIDPAPKPRMDRWEEVSHRLHNPEGEVTIAVVGKYTGLKDAYKSLIEALHHGGLANKVKVNLDWIEAQVFESEDPAPYLEKVHGILVPGGFGERGAEGKILAAKFARERKVPYFGICFGMQMACIEAARNLVGIEDASSSEFGPTREPVVGLMTEWLKGNMLEKRAAAGDLGGTMRLGAYEAVLKPDSKIAQIYGSTDIHERHRHRYEVNIDYKDRLEAAGLNFAGMSPDGVLPETVEYADHPWFIGVQYHPELKSRPFEPHPLFASFIEAAIEQSRLV.

Residues methionine 1–isoleucine 265 form an amidoligase domain region. Serine 13 provides a ligand contact to CTP. A UTP-binding site is contributed by serine 13. Serine 14–isoleucine 19 provides a ligand contact to ATP. Tyrosine 54 serves as a coordination point for L-glutamine. Aspartate 71 serves as a coordination point for ATP. Positions 71 and 139 each coordinate Mg(2+). CTP contacts are provided by residues aspartate 146 to glutamate 148, lysine 186 to glutamine 191, and lysine 222. Residues lysine 186 to glutamine 191 and lysine 222 each bind UTP. Residues threonine 291–leucine 541 enclose the Glutamine amidotransferase type-1 domain. Glycine 353 is an L-glutamine binding site. Cysteine 380 (nucleophile; for glutamine hydrolysis) is an active-site residue. L-glutamine is bound by residues phenylalanine 381–glutamine 384, glutamate 404, and arginine 469. Active-site residues include histidine 514 and glutamate 516.

The protein belongs to the CTP synthase family. As to quaternary structure, homotetramer.

The catalysed reaction is UTP + L-glutamine + ATP + H2O = CTP + L-glutamate + ADP + phosphate + 2 H(+). It carries out the reaction L-glutamine + H2O = L-glutamate + NH4(+). The enzyme catalyses UTP + NH4(+) + ATP = CTP + ADP + phosphate + 2 H(+). Its pathway is pyrimidine metabolism; CTP biosynthesis via de novo pathway; CTP from UDP: step 2/2. Allosterically activated by GTP, when glutamine is the substrate; GTP has no effect on the reaction when ammonia is the substrate. The allosteric effector GTP functions by stabilizing the protein conformation that binds the tetrahedral intermediate(s) formed during glutamine hydrolysis. Inhibited by the product CTP, via allosteric rather than competitive inhibition. Its function is as follows. Catalyzes the ATP-dependent amination of UTP to CTP with either L-glutamine or ammonia as the source of nitrogen. Regulates intracellular CTP levels through interactions with the four ribonucleotide triphosphates. The sequence is that of CTP synthase from Brucella canis (strain ATCC 23365 / NCTC 10854 / RM-666).